A 314-amino-acid polypeptide reads, in one-letter code: Serine acetyltransferase 1, chloroplastic (314 aa).

The protein belongs to the transferase hexapeptide repeat family. In terms of assembly, homomultimer. Interacts with OASA1 and CYP20-3. Component of the cysteine synthase complex (CSC) composed of two OAS-TL dimers and one SAT hexamer. As to expression, mostly expressed in leaves. Localized in cortex, trichomes and vascular tissues, particularly in phloem.

Its subcellular location is the plastid. The protein resides in the chloroplast. It is found in the cytoplasm. The enzyme catalyses L-serine + acetyl-CoA = O-acetyl-L-serine + CoA. It participates in amino-acid biosynthesis; L-cysteine biosynthesis; L-cysteine from L-serine: step 1/2. Its function is as follows. Serine acetyltransferase which catalyzes the formation of O-acetyl-L-serine from acetyl-CoA and L-serine. Also displays O-acetylserine (thio1)-lyase activity in vitro. May be involved in detoxification process by mediating the production of glutathione. The sequence is that of Serine acetyltransferase 1, chloroplastic (SAT1) from Arabidopsis thaliana (Mouse-ear cress).